We begin with the raw amino-acid sequence, 177 residues long: Small ribosomal subunit protein mS23 (177 aa).

N-acetylalanine is present on alanine 2. Lysine 83 is modified (N6-succinyllysine). Lysine 102 carries the N6-acetyllysine modification. Positions 145-177 (LQASSEGHEPQEDDDLAQRGQVKQEPETAPSPP) are disordered.

It belongs to the mitochondrion-specific ribosomal protein mS23 family. As to quaternary structure, component of the mitochondrial ribosome small subunit (28S) which comprises a 12S rRNA and about 30 distinct proteins.

It is found in the mitochondrion. This chain is Small ribosomal subunit protein mS23, found in Mus musculus (Mouse).